The sequence spans 207 residues: Arginine exporter protein ArgO (207 aa).

6 helical membrane passes run 1–21 (MLST…PLGP), 42–62 (LCAI…SALL), 67–87 (LLLQ…GWGA), 111–131 (VVAI…DTIV), 150–170 (FGAA…AAWF), and 185–205 (GFIC…GLLI).

It belongs to the LysE/ArgO transporter (TC 2.A.75) family.

The protein resides in the cell inner membrane. The enzyme catalyses L-arginine(in) = L-arginine(out). Functionally, involved in the export of arginine. Important to control the intracellular level of arginine and the correct balance between arginine and lysine. The chain is Arginine exporter protein ArgO from Photorhabdus laumondii subsp. laumondii (strain DSM 15139 / CIP 105565 / TT01) (Photorhabdus luminescens subsp. laumondii).